Consider the following 201-residue polypeptide: Adenylyl-sulfate kinase (201 aa).

35 to 42 contributes to the ATP binding site; the sequence is GLSGSGKS. Ser-109 (phosphoserine intermediate) is an active-site residue.

This sequence belongs to the APS kinase family.

It catalyses the reaction adenosine 5'-phosphosulfate + ATP = 3'-phosphoadenylyl sulfate + ADP + H(+). It functions in the pathway sulfur metabolism; hydrogen sulfide biosynthesis; sulfite from sulfate: step 2/3. Catalyzes the synthesis of activated sulfate. The protein is Adenylyl-sulfate kinase of Enterobacter sp. (strain 638).